Reading from the N-terminus, the 620-residue chain is MTTELLDRILSPADLRQLDRRELKRLADELRGFVLESVSRTGGHLSSNLGTVELSLALHYVFDTPHDRIVWDVGHQSYPHKILTGRREGMAHLRQQGGISGFPKRSESEYDAFGTAHSSTSISAALGMAVASRNAGVQRQHIAVIGDGAMSAGMAFEAMNNAGVTPNINLLVVLNDNDMSISPPVGALNRYLARLMSGQFYAAAKNVGRAVLQHVPPVLELARRLEEHAKGMVTPATLFEEFGFNYVGPIDGHDLDALVPTLQNLRALPGLQFLHVVTRKGQGYKLAEADPVLYHGPGKFDPAVGIQQAKAPARKTFTQVFGQWLCDMAERDERLVGITPAMREGSGLVEFEQRFPQRYFDVGIAEQHAVTFAAGLACEGQKPVVAIYSTFLQRGYDQLVHDVALQNLDVTFALDRAGLVGADGATHAGNYDIAFLRCVPNMVVAAPSDESEARLLLSTCYEHPGPASVRYPRGAGCGAAVGEGLATVPLGKGLVRREGRRIAILGFGTLVQAALGAAGQIDAMVADMRFVKPLDRELVLELAARHDALVTVEEAAIMGGAGSAVLETLAEAGVTLPVLQLGLPDAFIDHGDQAALLAGLGLDAAGIERAIRARFGALLA.

Thiamine diphosphate is bound by residues His-75 and 116–118 (AHS). A Mg(2+)-binding site is contributed by Asp-147. Residues 148–149 (GA), Asn-177, Tyr-284, and Glu-366 contribute to the thiamine diphosphate site. Asn-177 lines the Mg(2+) pocket.

It belongs to the transketolase family. DXPS subfamily. Homodimer. It depends on Mg(2+) as a cofactor. The cofactor is thiamine diphosphate.

It carries out the reaction D-glyceraldehyde 3-phosphate + pyruvate + H(+) = 1-deoxy-D-xylulose 5-phosphate + CO2. The protein operates within metabolic intermediate biosynthesis; 1-deoxy-D-xylulose 5-phosphate biosynthesis; 1-deoxy-D-xylulose 5-phosphate from D-glyceraldehyde 3-phosphate and pyruvate: step 1/1. Catalyzes the acyloin condensation reaction between C atoms 2 and 3 of pyruvate and glyceraldehyde 3-phosphate to yield 1-deoxy-D-xylulose-5-phosphate (DXP). This Bordetella pertussis (strain Tohama I / ATCC BAA-589 / NCTC 13251) protein is 1-deoxy-D-xylulose-5-phosphate synthase.